The sequence spans 168 residues: Bcl2-associated agonist of cell death (168 aa).

Met-1 is modified (N-acetylmethionine). The disordered stretch occupies residues 1-105; that stretch reads MFQIPEFEPS…RSRSAPPNLW (105 aa). Ser-25 is subject to Phosphoserine. Over residues 49 to 60 the composition is skewed to polar residues; it reads SHQQEQPTSSSH. 2 positions are modified to phosphoserine: Ser-75 and Ser-91. Asymmetric dimethylarginine; by PRMT1 is present on residues Arg-94 and Arg-96. Residue Ser-97 is modified to Phosphoserine. Ser-99 is modified (phosphoserine; by PKA, PKB, PAK1, RPS6KA1, RPS6KB1 and PKC/PRKCQ). Ser-99 is subject to Phosphoserine; by PKB/AKT1. Positions 110 to 124 match the BH3 motif; that stretch reads YGRELRRMSDEFVDS. Phosphoserine occurs at positions 118 and 134. Positions 125 to 145 are disordered; that stretch reads FKKGLPRPKSAGTATQMRQSS. Residues 136–145 are compositionally biased toward polar residues; sequence GTATQMRQSS. The residue at position 161 (Arg-161) is an Omega-N-methylarginine.

Belongs to the Bcl-2 family. In terms of assembly, forms heterodimers with the anti-apoptotic proteins, Bcl-X(L), Bcl-2 and Bcl-W. Also binds protein S100A10. The Ser-75/Ser-99 phosphorylated form binds 14-3-3 proteins. Interacts with AKT1 and PIM3. Interacts (via BH3 domain) with NOL3 (via CARD domain); preventing the association of BAD with BCL2. Interacts with HIF3A (via C-terminus domain); the interaction reduces the binding between BAD and BAX. Interacts with GIMAP3/IAN4 and GIMAP5/IAN5. In terms of processing, phosphorylated on one or more of Ser-75, Ser-99, Ser-118 and Ser-134 in response to survival stimuli, which blocks its pro-apoptotic activity. Phosphorylation on Ser-99 or Ser-75 promotes heterodimerization with 14-3-3 proteins. This interaction then facilitates the phosphorylation at Ser-118, a site within the BH3 motif, leading to the release of Bcl-X(L) and the promotion of cell survival. Ser-99 is the major site of AKT/PKB phosphorylation, Ser-118 the major site of protein kinase A (CAPK) phosphorylation. Phosphorylation at Ser-99 by PKB/AKT1 is almost completely blocked by the apoptotic C-terminus cleavage product of PKN2 generated by caspases-3 activity during apoptosis. Methylation at Arg-94 and Arg-96 by PRMT1 inhibits Akt-mediated phosphorylation at Ser-99. In terms of tissue distribution, expressed in a wide variety of tissues.

It localises to the mitochondrion outer membrane. It is found in the cytoplasm. Promotes cell death. Successfully competes for the binding to Bcl-X(L), Bcl-2 and Bcl-W, thereby affecting the level of heterodimerization of these proteins with BAX. Can reverse the death repressor activity of Bcl-X(L), but not that of Bcl-2. Appears to act as a link between growth factor receptor signaling and the apoptotic pathways. The polypeptide is Bcl2-associated agonist of cell death (BAD) (Homo sapiens (Human)).